A 182-amino-acid chain; its full sequence is Large ribosomal subunit protein bL25 (182 aa).

The protein belongs to the bacterial ribosomal protein bL25 family. CTC subfamily. In terms of assembly, part of the 50S ribosomal subunit; part of the 5S rRNA/L5/L18/L25 subcomplex. Contacts the 5S rRNA. Binds to the 5S rRNA independently of L5 and L18.

Functionally, this is one of the proteins that binds to the 5S RNA in the ribosome where it forms part of the central protuberance. In Borrelia garinii subsp. bavariensis (strain ATCC BAA-2496 / DSM 23469 / PBi) (Borreliella bavariensis), this protein is Large ribosomal subunit protein bL25.